The following is a 341-amino-acid chain: MTLLLAGDIGGTKTILQLVETSDSQGLHTIYQESYHSADFPDLVPIVQQFLIKANTPIPEKACFAIAGPIVKNTAKLTNLAWFLDTERLQQELGIPHIYLINDFAAVGYGISGLQKQDLHPLQVGKPQPETPIGIIGAGTGLGQGFLIKQGNNYQVFPSEGGHADFAPRNEIEFQLLKYLLDKHDIQRISVERVVSGMGIVAIYQFLRDRKFAAESPDIAQIVRTWEQEAGQEEKSVDPGAAIGTAALEKRDRLSEQTLQLFIEAYGAEAGNLALKLLPYGGLYIAGGIAPKILPLIQNSGFLLNFTQKGRMRPLLEEIPVYIILNPQVGLIGAALCAARL.

7-12 provides a ligand contact to ATP; that stretch reads GDIGGT.

This sequence belongs to the bacterial glucokinase family.

Its subcellular location is the cytoplasm. It catalyses the reaction D-glucose + ATP = D-glucose 6-phosphate + ADP + H(+). The polypeptide is Glucokinase (Nostoc punctiforme (strain ATCC 29133 / PCC 73102)).